The chain runs to 1027 residues: Multidrug resistance protein MdtC (1027 aa).

12 helical membrane-spanning segments follow: residues 16–36 (LLSL…PVAP), 333–353 (EVER…FLFL), 360–380 (LIPA…MYLC), 387–407 (LSLM…IVVL), 431–451 (VGFT…PLLL), 463–483 (FAIT…TLTP), 528–548 (WIMA…ISAP), 853–873 (LILI…LYES), 875–895 (IHPL…LLAL), 897–917 (LFDT…IGIV), 953–973 (PIIM…LSSG), and 984–1004 (ITIV…TPII).

It belongs to the resistance-nodulation-cell division (RND) (TC 2.A.6) family. MdtC subfamily. As to quaternary structure, part of a tripartite efflux system composed of MdtA, MdtB and MdtC. MdtC forms a heteromultimer with MdtB.

Its subcellular location is the cell inner membrane. The sequence is that of Multidrug resistance protein MdtC from Proteus mirabilis (strain HI4320).